Here is a 463-residue protein sequence, read N- to C-terminus: MSTNQIILTDQGDNYLNVWSHVAQDLYNHYGETLYNSWFSKVNFIESSLNTVILCAPTNFVRDWIKSKYSMVILQLFQHYNNTIKSVEIITKELPGTSKTVIELPTKTFADIGSSELNAENIFSTLDVRFTFDNFVVGVPNELAYAAARAVAESTDAVSESNPLFLYGGVGLGKTHLMHAIGWYIKQNNPNRKVIYMSAEKFMYQFVKALRNKEVISFKEKFRSVDVLMIDDIQFICGKDSTQEEFFHTFNTLIDNNRQIVISCDRSPSDLDNIEDRIKSRLGWGLVADVHSTTYELRLGILESKIEQMNVKIPKNVIDFLASKIVSNVRELEGALNKVIAHSNFTLKEITLENTQNILRDLLRSNERIITVEDIQKKVASRYNIKLSDMSSSRRLREVARPRQIAMYLSKTLTPKSLADIGKKFGKKDHTTVMHAIKKVEELLENDIELREEINLLMKILQN.

The interval 1-83 is domain I, interacts with DnaA modulators; sequence MSTNQIILTD…LQLFQHYNNT (83 aa). The domain II stretch occupies residues 83–124; sequence TIKSVEIITKELPGTSKTVIELPTKTFADIGSSELNAENIFS. A domain III, AAA+ region region spans residues 125 to 343; sequence TLDVRFTFDN…GALNKVIAHS (219 aa). Positions 171, 173, 174, and 175 each coordinate ATP. Positions 344–463 are domain IV, binds dsDNA; the sequence is NFTLKEITLE…INLLMKILQN (120 aa).

The protein belongs to the DnaA family. As to quaternary structure, oligomerizes as a right-handed, spiral filament on DNA at oriC.

The protein resides in the cytoplasm. In terms of biological role, plays an essential role in the initiation and regulation of chromosomal replication. ATP-DnaA binds to the origin of replication (oriC) to initiate formation of the DNA replication initiation complex once per cell cycle. Binds the DnaA box (a 9 base pair repeat at the origin) and separates the double-stranded (ds)DNA. Forms a right-handed helical filament on oriC DNA; dsDNA binds to the exterior of the filament while single-stranded (ss)DNA is stabiized in the filament's interior. The ATP-DnaA-oriC complex binds and stabilizes one strand of the AT-rich DNA unwinding element (DUE), permitting loading of DNA polymerase. After initiation quickly degrades to an ADP-DnaA complex that is not apt for DNA replication. Binds acidic phospholipids. In Rickettsia canadensis (strain McKiel), this protein is Chromosomal replication initiator protein DnaA.